A 103-amino-acid chain; its full sequence is MIPGELHIADGIIELNVNREKVIVMVINNGDRPIQVGSHFHFYEVNNALFFNRNFALGFRLNVPSGTSIRFEPGQTREVELVRYSGELKIVGFCKKIMGKLSK.

This sequence belongs to the urease beta subunit family. As to quaternary structure, heterotrimer of UreA (gamma), UreB (beta) and UreC (alpha) subunits. Three heterotrimers associate to form the active enzyme.

Its subcellular location is the cytoplasm. The enzyme catalyses urea + 2 H2O + H(+) = hydrogencarbonate + 2 NH4(+). It participates in nitrogen metabolism; urea degradation; CO(2) and NH(3) from urea (urease route): step 1/1. This is Urease subunit beta from Blochmanniella floridana.